The sequence spans 263 residues: Endonuclease 8 (263 aa).

Pro-2 (schiff-base intermediate with DNA) is an active-site residue. Residue Glu-3 is the Proton donor of the active site. Lys-53 acts as the Proton donor; for beta-elimination activity in catalysis. 3 residues coordinate DNA: Gln-70, Arg-125, and Asn-169. The segment at 229–263 adopts an FPG-type zinc-finger fold; sequence KVFHRDGELCERCGGIIEKTTLSSRPFYWCPGCQH. Arg-253 acts as the Proton donor; for delta-elimination activity in catalysis.

This sequence belongs to the FPG family. Requires Zn(2+) as cofactor.

It catalyses the reaction 2'-deoxyribonucleotide-(2'-deoxyribose 5'-phosphate)-2'-deoxyribonucleotide-DNA = a 3'-end 2'-deoxyribonucleotide-(2,3-dehydro-2,3-deoxyribose 5'-phosphate)-DNA + a 5'-end 5'-phospho-2'-deoxyribonucleoside-DNA + H(+). Involved in base excision repair of DNA damaged by oxidation or by mutagenic agents. Acts as a DNA glycosylase that recognizes and removes damaged bases. Has a preference for oxidized pyrimidines, such as thymine glycol, 5,6-dihydrouracil and 5,6-dihydrothymine. Has AP (apurinic/apyrimidinic) lyase activity and introduces nicks in the DNA strand. Cleaves the DNA backbone by beta-delta elimination to generate a single-strand break at the site of the removed base with both 3'- and 5'-phosphates. This is Endonuclease 8 from Escherichia coli O7:K1 (strain IAI39 / ExPEC).